Reading from the N-terminus, the 276-residue chain is uncharacterized protein (276 aa).

The region spanning 20–137 (PVLIFIPGAN…PPINTFLPDS (118 aa)) is the AB hydrolase-1 domain. The tract at residues 57–76 (GESELTEPLPDSASNPDSDY) is disordered.

The protein belongs to the AB hydrolase superfamily.

This is an uncharacterized protein from Staphylococcus aureus (strain N315).